We begin with the raw amino-acid sequence, 108 residues long: UPF0060 membrane protein Ent638_1931 (108 aa).

Helical transmembrane passes span 6–26 (LLFF…WLWL), 29–49 (GASV…VWLL), 61–81 (AAYG…VDGV), and 85–105 (AYDW…VAGW).

It belongs to the UPF0060 family.

The protein resides in the cell inner membrane. In Enterobacter sp. (strain 638), this protein is UPF0060 membrane protein Ent638_1931.